The chain runs to 230 residues: Ribosome biogenesis protein SLX9 homolog (230 aa).

The segment covering 1–11 has biased composition (basic residues); the sequence is MGKVRGLRARV. Disordered stretches follow at residues 1-42 and 155-187; these read MGKV…SAAG and LGLE…AQRQ. The span at 25 to 38 shows a compositional bias: pro residues; sequence GPAPPAPEATPPPA. Phosphothreonine is present on threonine 34. A compositionally biased stretch (basic and acidic residues) spans 166–177; it reads RSRESNKPRPSE. Position 203 is a phosphoserine (serine 203).

It belongs to the SLX9 family. As to expression, not detected in any tested tissue.

The protein resides in the nucleus. Its subcellular location is the nucleolus. Functionally, may be involved in ribosome biogenesis. This is Ribosome biogenesis protein SLX9 homolog from Homo sapiens (Human).